Reading from the N-terminus, the 254-residue chain is MSLNFTVVIPARLRSTRLPGKPLLPIAGKPMVQHVWEQARRSGASRVVIATDDASILEACQAFGAEVLMTRADHESGTDRLAEVVAHLGLPADAIVVNVQGDEPLIPPVIIDQVAANLAAHPEAGIATLAEPIHEPETVFNPNAVKVVSDKNGLALTFSRAPLPWARDAFAKDRNVLPEGVPYRRHIGMYAYRVGFLQDFVSWGPCWLEQTEALEQLRALWHGVRIHVEDAIEAPAVGVDTPEDLERVRRLLEA.

Belongs to the KdsB family.

The protein resides in the cytoplasm. It catalyses the reaction 3-deoxy-alpha-D-manno-oct-2-ulosonate + CTP = CMP-3-deoxy-beta-D-manno-octulosonate + diphosphate. The protein operates within nucleotide-sugar biosynthesis; CMP-3-deoxy-D-manno-octulosonate biosynthesis; CMP-3-deoxy-D-manno-octulosonate from 3-deoxy-D-manno-octulosonate and CTP: step 1/1. It participates in bacterial outer membrane biogenesis; lipopolysaccharide biosynthesis. In terms of biological role, activates KDO (a required 8-carbon sugar) for incorporation into bacterial lipopolysaccharide in Gram-negative bacteria. This is 3-deoxy-manno-octulosonate cytidylyltransferase from Pseudomonas putida (strain GB-1).